A 487-amino-acid chain; its full sequence is Ribosome biogenesis protein YTM1 (487 aa).

The interval 13 to 95 is ubiquitin-like (UBL) domain; the sequence is VKVTFTTNEA…ETNLTLQYVR (83 aa). WD repeat units lie at residues 122–161, 168–206, 217–256, 379–419, and 451–487; these read SPAG…LVTA, GHSA…ASGQ, GHRA…SPEA, GHTN…PASG, and GEGA…VVRE. The tract at residues 253–277 is disordered; the sequence is SPEADASLLPNAHTSKRRKVASSVT.

It belongs to the WD repeat WDR12/YTM1 family. In terms of assembly, component of the NOP7 complex, composed of ERB1, NOP7 and YTM1. The complex is held together by ERB1, which interacts with NOP7 via its N-terminal domain and with YTM1 via a high-affinity interaction between the seven-bladed beta-propeller domains of the 2 proteins. The NOP7 complex associates with the 66S pre-ribosome. Interacts (via UBL domain) with MDN1 (via VWFA/MIDAS domain).

It is found in the nucleus. The protein localises to the nucleolus. It localises to the nucleoplasm. Its function is as follows. Component of the NOP7 complex, which is required for maturation of the 25S and 5.8S ribosomal RNAs and formation of the 60S ribosome. This chain is Ribosome biogenesis protein YTM1, found in Podospora anserina (strain S / ATCC MYA-4624 / DSM 980 / FGSC 10383) (Pleurage anserina).